The primary structure comprises 285 residues: Probable endonuclease 4 (285 aa).

H69, H109, E145, D179, H182, H216, D229, H231, and E261 together coordinate Zn(2+).

The protein belongs to the AP endonuclease 2 family. Zn(2+) serves as cofactor.

It carries out the reaction Endonucleolytic cleavage to 5'-phosphooligonucleotide end-products.. Its function is as follows. Endonuclease IV plays a role in DNA repair. It cleaves phosphodiester bonds at apurinic or apyrimidinic (AP) sites, generating a 3'-hydroxyl group and a 5'-terminal sugar phosphate. The protein is Probable endonuclease 4 of Enterobacter sp. (strain 638).